Here is a 130-residue protein sequence, read N- to C-terminus: Ion transport peptide (130 aa).

3 disulfides stabilise this stretch: C62–C98, C78–C94, and C81–C107. The residue at position 127 (L127) is a Leucine amide.

This sequence belongs to the arthropod CHH/MIH/GIH/VIH hormone family. In terms of tissue distribution, brain and corpus cardiacum.

Its subcellular location is the secreted. Its function is as follows. Stimulates salt and water reabsorption and inhibits acid secretion in the ileum of S.gregaria. This Schistocerca gregaria (Desert locust) protein is Ion transport peptide.